The primary structure comprises 264 residues: Thiazole synthase (264 aa).

Lys-98 functions as the Schiff-base intermediate with DXP in the catalytic mechanism. 1-deoxy-D-xylulose 5-phosphate is bound by residues Gly-159, 185-186, and 207-208; these read AG and AT.

The protein belongs to the ThiG family. In terms of assembly, homotetramer. Forms heterodimers with either ThiH or ThiS.

The protein resides in the cytoplasm. It catalyses the reaction [ThiS sulfur-carrier protein]-C-terminal-Gly-aminoethanethioate + 2-iminoacetate + 1-deoxy-D-xylulose 5-phosphate = [ThiS sulfur-carrier protein]-C-terminal Gly-Gly + 2-[(2R,5Z)-2-carboxy-4-methylthiazol-5(2H)-ylidene]ethyl phosphate + 2 H2O + H(+). The protein operates within cofactor biosynthesis; thiamine diphosphate biosynthesis. In terms of biological role, catalyzes the rearrangement of 1-deoxy-D-xylulose 5-phosphate (DXP) to produce the thiazole phosphate moiety of thiamine. Sulfur is provided by the thiocarboxylate moiety of the carrier protein ThiS. In vitro, sulfur can be provided by H(2)S. The sequence is that of Thiazole synthase from Mycobacterium ulcerans (strain Agy99).